Reading from the N-terminus, the 240-residue chain is Predicted GPI-anchored protein 58 (240 aa).

The first 18 residues, 1 to 18, serve as a signal peptide directing secretion; it reads MQFSTLVSLAAVIVSTNA. The disordered stretch occupies residues 41–216; sequence HTNCPASSPA…NSTGPSSVPT (176 aa). The segment covering 51 to 86 has biased composition (pro residues); that stretch reads TPAPAPSASAPAPPAPEQPEPSAPAPAPSAPAPEQP. Positions 87 to 103 are enriched in low complexity; it reads EQPATPATPAAPATPAT. 2 stretches are compositionally biased toward pro residues: residues 104-137 and 153-192; these read PAAPEPSAPAPEQPASPAAPAPAPSAPAPAPEQP and APAPSAPAPPAPEQPESAPAPAPSAPAPEQPESSPAPAPS. Over residues 193 to 216 the composition is skewed to low complexity; the sequence is APASVPEQPASSVSNSTGPSSVPT. A glycan (N-linked (GlcNAc...) asparagine) is linked at Asn207. The GPI-anchor amidated glycine moiety is linked to residue Gly219. A propeptide spans 220-240 (removed in mature form); it reads AAAKQYITGSVAVIAAALLAL.

The protein localises to the cell membrane. This Candida albicans (strain SC5314 / ATCC MYA-2876) (Yeast) protein is Predicted GPI-anchored protein 58 (PGA58).